The sequence spans 297 residues: 4-hydroxy-tetrahydrodipicolinate synthase (297 aa).

Position 46 (T46) interacts with pyruvate. The active-site Proton donor/acceptor is the Y134. Residue K162 is the Schiff-base intermediate with substrate of the active site. I209 serves as a coordination point for pyruvate.

This sequence belongs to the DapA family. In terms of assembly, homotetramer; dimer of dimers.

The protein localises to the cytoplasm. The enzyme catalyses L-aspartate 4-semialdehyde + pyruvate = (2S,4S)-4-hydroxy-2,3,4,5-tetrahydrodipicolinate + H2O + H(+). It participates in amino-acid biosynthesis; L-lysine biosynthesis via DAP pathway; (S)-tetrahydrodipicolinate from L-aspartate: step 3/4. Its function is as follows. Catalyzes the condensation of (S)-aspartate-beta-semialdehyde [(S)-ASA] and pyruvate to 4-hydroxy-tetrahydrodipicolinate (HTPA). This chain is 4-hydroxy-tetrahydrodipicolinate synthase, found in Methanosphaera stadtmanae (strain ATCC 43021 / DSM 3091 / JCM 11832 / MCB-3).